The chain runs to 310 residues: uncharacterized protein (310 aa).

2 disordered regions span residues 22-163 (LARQ…PVEH) and 178-209 (EAEAETEVREAQPGRGERHAAAAAAGTDVEGD). Basic and acidic residues-rich tracts occupy residues 56 to 66 (IIRDDHHHAGP) and 183 to 197 (TEVREAQPGRGERHA). The span at 198–209 (AAAAAGTDVEGD) shows a compositional bias: low complexity. 3 helical membrane-spanning segments follow: residues 231-251 (ALVVLQSILAVAFGAGLFIAF), 257-277 (WNSIVALVLSVMVILGLVVSV), and 286-306 (IASTLIAVAVGALITLGPLAL).

This sequence to M.leprae ML2433.

It localises to the cell membrane. This is an uncharacterized protein from Mycobacterium tuberculosis (strain CDC 1551 / Oshkosh).